The following is a 449-amino-acid chain: Na(+)/H(+) antiporter NhaA (449 aa).

Transmembrane regions (helical) follow at residues 30 to 50 (IFLI…WAGA), 69 to 89 (FGLT…FLVA), 112 to 132 (LLAA…LNLG), 138 to 158 (GWGI…GLLG), 168 to 188 (FLIA…ALFY), 192 to 212 (LSWI…LMNW), 218 to 238 (LIWY…SGIH), 241 to 261 (IAGV…SKIL), 312 to 332 (SLVD…NAGV), 348 to 368 (LGIL…FTLI), 386 to 406 (IIGI…ITNL), and 419 to 439 (ISIL…LLLT).

The protein belongs to the NhaA Na(+)/H(+) (TC 2.A.33) antiporter family.

It is found in the cell inner membrane. It carries out the reaction Na(+)(in) + 2 H(+)(out) = Na(+)(out) + 2 H(+)(in). Functionally, na(+)/H(+) antiporter that extrudes sodium in exchange for external protons. This chain is Na(+)/H(+) antiporter NhaA, found in Christiangramia forsetii (strain DSM 17595 / CGMCC 1.15422 / KT0803) (Gramella forsetii).